The chain runs to 290 residues: Xyloglucan endotransglucosylase/hydrolase protein 3 (290 aa).

A signal peptide spans 1 to 21 (MDYMRIFSVFVVTLWIIRVDA). In terms of domain architecture, GH16 spans 22–220 (RVFGGRGIEK…WSYSPFIAHF (199 aa)). Glutamate 109 (nucleophile) is an active-site residue. Catalysis depends on glutamate 113, which acts as the Proton donor. Xyloglucan is bound by residues glutamate 113, 126 to 128 (QTN), 136 to 138 (NRE), 199 to 200 (DW), and glycine 204. N-linked (GlcNAc...) asparagine glycosylation is present at asparagine 210. 2 disulfide bridges follow: cysteine 228-cysteine 240 and cysteine 276-cysteine 289.

The protein belongs to the glycosyl hydrolase 16 family. XTH group 1 subfamily. Contains at least one intrachain disulfide bond essential for its enzymatic activity. Predominantly expressed in flower buds.

The protein resides in the secreted. Its subcellular location is the cell wall. The protein localises to the extracellular space. It localises to the apoplast. The enzyme catalyses breaks a beta-(1-&gt;4) bond in the backbone of a xyloglucan and transfers the xyloglucanyl segment on to O-4 of the non-reducing terminal glucose residue of an acceptor, which can be a xyloglucan or an oligosaccharide of xyloglucan.. Its function is as follows. Catalyzes xyloglucan endohydrolysis (XEH) and/or endotransglycosylation (XET). Cleaves and religates xyloglucan polymers, an essential constituent of the primary cell wall, and thereby participates in cell wall construction of growing tissues. This chain is Xyloglucan endotransglucosylase/hydrolase protein 3 (XTH3), found in Arabidopsis thaliana (Mouse-ear cress).